The sequence spans 245 residues: Probable transcriptional regulatory protein LVIS_1199 (245 aa).

The tract at residues Met-1–Lys-23 is disordered.

The protein belongs to the TACO1 family.

It localises to the cytoplasm. This is Probable transcriptional regulatory protein LVIS_1199 from Levilactobacillus brevis (strain ATCC 367 / BCRC 12310 / CIP 105137 / JCM 1170 / LMG 11437 / NCIMB 947 / NCTC 947) (Lactobacillus brevis).